An 88-amino-acid polypeptide reads, in one-letter code: Large ribosomal subunit protein bL27 (88 aa).

Belongs to the bacterial ribosomal protein bL27 family.

This is Large ribosomal subunit protein bL27 from Mycobacterium leprae (strain TN).